The sequence spans 458 residues: Chromosomal replication initiator protein DnaA (458 aa).

Residues 1-84 (MENIWLEAQT…FHVAEEKPEA (84 aa)) are domain I, interacts with DnaA modulators. The span at 80–119 (EKPEAAHEAKPEKEAKPAREKERDKDKEKEKDREKEKKEL) shows a compositional bias: basic and acidic residues. The segment at 80-120 (EKPEAAHEAKPEKEAKPAREKERDKDKEKEKDREKEKKELV) is disordered. The segment at 84 to 121 (AAHEAKPEKEAKPAREKERDKDKEKEKDREKEKKELVP) is domain II. The domain III, AAA+ region stretch occupies residues 122–338 (NLNPKYTFES…GMLIRLEAFA (217 aa)). Residues glycine 166, glycine 168, lysine 169, and threonine 170 each coordinate ATP. The interval 339 to 458 (SLTGQEITLS…VEDIRKKLFT (120 aa)) is domain IV, binds dsDNA.

Belongs to the DnaA family. Oligomerizes as a right-handed, spiral filament on DNA at oriC.

Its subcellular location is the cytoplasm. In terms of biological role, plays an essential role in the initiation and regulation of chromosomal replication. ATP-DnaA binds to the origin of replication (oriC) to initiate formation of the DNA replication initiation complex once per cell cycle. Binds the DnaA box (a 9 base pair repeat at the origin) and separates the double-stranded (ds)DNA. Forms a right-handed helical filament on oriC DNA; dsDNA binds to the exterior of the filament while single-stranded (ss)DNA is stabiized in the filament's interior. The ATP-DnaA-oriC complex binds and stabilizes one strand of the AT-rich DNA unwinding element (DUE), permitting loading of DNA polymerase. After initiation quickly degrades to an ADP-DnaA complex that is not apt for DNA replication. Binds acidic phospholipids. In Citrifermentans bemidjiense (strain ATCC BAA-1014 / DSM 16622 / JCM 12645 / Bem) (Geobacter bemidjiensis), this protein is Chromosomal replication initiator protein DnaA.